We begin with the raw amino-acid sequence, 342 residues long: Tetraacyldisaccharide 4'-kinase (342 aa).

68–75 (TVGGTGKT) contributes to the ATP binding site.

Belongs to the LpxK family.

The catalysed reaction is a lipid A disaccharide + ATP = a lipid IVA + ADP + H(+). It participates in glycolipid biosynthesis; lipid IV(A) biosynthesis; lipid IV(A) from (3R)-3-hydroxytetradecanoyl-[acyl-carrier-protein] and UDP-N-acetyl-alpha-D-glucosamine: step 6/6. Transfers the gamma-phosphate of ATP to the 4'-position of a tetraacyldisaccharide 1-phosphate intermediate (termed DS-1-P) to form tetraacyldisaccharide 1,4'-bis-phosphate (lipid IVA). This is Tetraacyldisaccharide 4'-kinase from Burkholderia lata (strain ATCC 17760 / DSM 23089 / LMG 22485 / NCIMB 9086 / R18194 / 383).